Reading from the N-terminus, the 500-residue chain is Probable cytosol aminopeptidase (500 aa).

Residues Lys-262 and Asp-267 each contribute to the Mn(2+) site. The active site involves Lys-274. The Mn(2+) site is built by Asp-285, Asp-344, and Glu-346. Residue Arg-348 is part of the active site.

The protein belongs to the peptidase M17 family. Mn(2+) is required as a cofactor.

It localises to the cytoplasm. The enzyme catalyses Release of an N-terminal amino acid, Xaa-|-Yaa-, in which Xaa is preferably Leu, but may be other amino acids including Pro although not Arg or Lys, and Yaa may be Pro. Amino acid amides and methyl esters are also readily hydrolyzed, but rates on arylamides are exceedingly low.. It carries out the reaction Release of an N-terminal amino acid, preferentially leucine, but not glutamic or aspartic acids.. Its function is as follows. Presumably involved in the processing and regular turnover of intracellular proteins. Catalyzes the removal of unsubstituted N-terminal amino acids from various peptides. The sequence is that of Probable cytosol aminopeptidase from Ehrlichia ruminantium (strain Welgevonden).